We begin with the raw amino-acid sequence, 192 residues long: Fe/S biogenesis protein NfuA (192 aa).

2 residues coordinate [4Fe-4S] cluster: Cys149 and Cys152.

The protein belongs to the NfuA family. As to quaternary structure, homodimer. Requires [4Fe-4S] cluster as cofactor.

Involved in iron-sulfur cluster biogenesis. Binds a 4Fe-4S cluster, can transfer this cluster to apoproteins, and thereby intervenes in the maturation of Fe/S proteins. Could also act as a scaffold/chaperone for damaged Fe/S proteins. The chain is Fe/S biogenesis protein NfuA from Colwellia psychrerythraea (strain 34H / ATCC BAA-681) (Vibrio psychroerythus).